The following is a 259-amino-acid chain: Flap endonuclease Xni (259 aa).

Position 109 (Asp109) interacts with Mg(2+). Positions 165 to 255 (LKPEQLADYW…FNLQDIRYEK (91 aa)) constitute a 5'-3' exonuclease domain. Residues Leu176, Ala177, Ile187, and Val190 each contribute to the K(+) site. The segment at 189 to 194 (GVGPKA) is interaction with DNA.

The protein belongs to the Xni family. The cofactor is Mg(2+). K(+) serves as cofactor.

Functionally, has flap endonuclease activity. During DNA replication, flap endonucleases cleave the 5'-overhanging flap structure that is generated by displacement synthesis when DNA polymerase encounters the 5'-end of a downstream Okazaki fragment. In Aliivibrio fischeri (strain ATCC 700601 / ES114) (Vibrio fischeri), this protein is Flap endonuclease Xni.